The following is a 2437-amino-acid chain: MNRFLVKLTLLTAASLATVAQGQRCSEYCQNGGICEYKPSGEASCRCPADFVGAQCQFPNPCNPSPCRNGGVCRPQMQGNEVGVKCDCVLGFSDRLCLTPVNHACMNSPCRNGGTCSLLTLDTFTCRCQPGWSGKTCQLADPCASNPCANGGQCSAFESHYICTCPPNFHGQTCRQDVNECAVSPSPCRNGGTCINEVGSYLCRCPPEYTGPHCQRLYQPCLPSPCRSGGTCVQTSDTTHTCSCLPGFTGQTCEHNVDDCTQHACENGGPCIDGINTYNCHCDKHWTGQYCTEDVDECELSPNACQNGGTCHNTIGGFHCVCVNGWTGDDCSENIDDCASAACSHGATCHDRVASFFCECPHGRTGLLCHLDDACISNPCQKGSNCDTNPVSGKAICTCPPGYTGSACNQDIDECSLGANPCEHGGRCLNTKGSFQCKCLQGYEGPRCEMDVNECKSNPCQNDATCLDQIGGFHCICMPGYEGVFCQINSDDCASQPCLNGKCIDKINSFHCECPKGFSGSLCQVDVDECASTPCKNGAKCTDGPNKYTCECTPGFSGIHCELDINECASSPCHYGVCRDGVASFTCDCRPGYTGRLCETNINECLSQPCRNGGTCQDRENAYICTCPKGTTGVNCEINIDDCKRKPCDYGKCIDKINGYECVCEPGYSGSMCNINIDDCALNPCHNGGTCIDGVNSFTCLCPDGFRDATCLSQHNECSSNPCIHGSCLDQINSYRCVCEAGWMGRNCDININECLSNPCVNGGTCKDMTSGYLCTCRAGFSGPNCQMNINECASNPCLNQGSCIDDVAGFKCNCMLPYTGEVCENVLAPCSPRPCKNGGVCRESEDFQSFSCNCPAGWQGQTCEVDINECVRNPCTNGGVCENLRGGFQCRCNPGFTGALCENDIDDCEPNPCSNGGVCQDRVNGFVCVCLAGFRGERCAEDIDECVSAPCRNGGNCTDCVNSYTCSCPAGFSGINCEINTPDCTESSCFNGGTCVDGISSFSCVCLPGFTGNYCQHDVNECDSRPCQNGGSCQDGYGTYKCTCPHGYTGLNCQSLVRWCDSSPCKNGGSCWQQGASFTCQCASGWTGIYCDVPSVSCEVAARQQGVSVAVLCRHAGQCVDAGNTHLCRCQAGYTGSYCQEQVDECQPNPCQNGATCTDYLGGYSCECVPGYHGMNCSKEINECLSQPCQNGGTCIDLVNTYKCSCPRGTQGVHCEIDIDDCSPSVDPLTGEPRCFNGGRCVDRVGGYGCVCPAGFVGERCEGDVNECLSDPCDPSGSYNCVQLINDFRCECRTGYTGKRCETVFNGCKDTPCKNGGTCAVASNTKHGYICKCQPGYSGSSCEYDSQSCGSLRCRNGATCVSGHLSPRCLCAPGFSGHECQTRMDSPCLVNPCYNGGTCQPISDAPFYRCSCPANFNGLLCHILDYSFSGGQGRDIAPPVEVEIRCEIAQCEGRGGNAICDTQCNNHACGWDGGDCSLNFDDPWQNCSAALQCWRYFNDGKCDEQCATAGCLYDGFDCQRLEGQCNPLYDQYCRDHYADGHCDQGCNNAECEWDGLDCADDVPQKLAVGSLVLVVHIPPDELRNRSSSFLRELSSLLHTNVVFRRDANGEALIFPYYGSEHELSKHKRSDWTDPGQLMQRARRSLTSFLKPRTRRELDHMEVKGSIVYLEIDNRQCFQQSDECFQSATDVAAFLGALASSGNLNVPYIIEAVTSEGGPPKTGEMYPMFLVLLALAVLALAAVGVVVSRKRKREHGQLWFPEGFKVNEPKKKRREPVGEDSVGLKPLKNSDSSLMDEQLSEWAEDDTNKRFRFEGQSILEMSGQLDHRQWTQQHLDAADLRLNSMAPTPPQGQIENDCMDVNVRGPDGFTPLMIASCSGGGLENENGEAEEDPSADVITDFIYHGANLHNQTDRTGETALHLAARYARSDAAKRLLESCADANVQDNMGRTPLHAAVAADAQGVFQILIRNRATDLDARMHDGTTPLILATRLAVEGMVEELINCHADPNAVDDSGKSALHWAAAVNNVDAAVVLLKNGANKDLQNNKEETPLFLAAREGSYETAKVLLDHLANRDIADHLDQLPRDIAHERMHHDIVRLLEEYNLVRSPPLPLSPPLCCPNTYLGIKPSPGNNNNTAKKTRKPGGKGVGGKDSGKDIRTKKKKSGDGKNGGIMEVGVLSPVDSLESPHGYLSDVSSPPMMTSPFQQSPPISLNQLQGLADSHMGGALQGLGKPFDSAPRLSHLPVANNVGGAQAGACDWLQRVQQQQQQQQQQQQAGMLMPTMLSATNMPQVMGYPTMQSSHLGAPSHMIAHQNMAPMQHQNISHHFLGDLSGLDLQSSSGHAPIQTILPQDSQRMAPPISSTQFLTPPSQHSYSNPMDNTPNHQQVPDHPFLTPSAGSPDQWSSSSPHSNLSDWSEGISSPPTSMQMNHIPEAFK.

An N-terminal signal peptide occupies residues 1-20 (MNRFLVKLTLLTAASLATVA). EGF-like domains lie at 21 to 57 (QGQR…AQCQ), 58 to 98 (FPNP…RLCL), 101 to 138 (VNHA…KTCQ), and 139 to 175 (LADP…QTCR). Topologically, residues 21-1726 (QGQRCSEYCQ…GGPPKTGEMY (1706 aa)) are extracellular. Intrachain disulfides connect Cys-25–Cys-35, Cys-29–Cys-45, Cys-47–Cys-56, Cys-62–Cys-73, Cys-67–Cys-86, Cys-88–Cys-97, Cys-105–Cys-116, Cys-110–Cys-126, Cys-128–Cys-137, Cys-143–Cys-154, Cys-148–Cys-163, Cys-165–Cys-174, Cys-181–Cys-194, Cys-188–Cys-203, Cys-205–Cys-214, Cys-221–Cys-232, Cys-226–Cys-242, Cys-244–Cys-253, Cys-260–Cys-271, Cys-265–Cys-280, Cys-282–Cys-291, Cys-298–Cys-311, Cys-305–Cys-320, Cys-322–Cys-331, Cys-338–Cys-349, Cys-343–Cys-358, Cys-360–Cys-369, Cys-375–Cys-386, Cys-380–Cys-397, Cys-399–Cys-408, Cys-415–Cys-428, Cys-422–Cys-437, Cys-439–Cys-448, Cys-455–Cys-466, Cys-460–Cys-475, Cys-477–Cys-486, Cys-493–Cys-503, Cys-498–Cys-512, Cys-514–Cys-523, Cys-530–Cys-541, Cys-535–Cys-550, Cys-552–Cys-561, Cys-568–Cys-578, Cys-573–Cys-587, Cys-589–Cys-598, Cys-605–Cys-616, Cys-610–Cys-625, Cys-627–Cys-636, Cys-643–Cys-653, Cys-648–Cys-662, Cys-664–Cys-673, Cys-680–Cys-691, Cys-685–Cys-700, Cys-702–Cys-711, Cys-718–Cys-728, Cys-723–Cys-737, Cys-739–Cys-748, Cys-755–Cys-766, Cys-760–Cys-775, Cys-777–Cys-786, Cys-793–Cys-804, Cys-798–Cys-813, Cys-815–Cys-824, Cys-831–Cys-842, Cys-836–Cys-853, Cys-855–Cys-864, Cys-871–Cys-882, Cys-876–Cys-891, Cys-893–Cys-902, Cys-909–Cys-920, Cys-914–Cys-929, Cys-931–Cys-940, Cys-947–Cys-958, Cys-952–Cys-967, Cys-969–Cys-978, Cys-985–Cys-996, Cys-990–Cys-1005, Cys-1007–Cys-1016, Cys-1023–Cys-1034, Cys-1028–Cys-1043, Cys-1045–Cys-1054, Cys-1061–Cys-1072, Cys-1066–Cys-1081, Cys-1083–Cys-1092, Cys-1099–Cys-1120, Cys-1114–Cys-1129, Cys-1131–Cys-1140, Cys-1147–Cys-1158, Cys-1152–Cys-1167, Cys-1169–Cys-1178, Cys-1185–Cys-1196, Cys-1190–Cys-1205, Cys-1207–Cys-1216, Cys-1223–Cys-1242, Cys-1236–Cys-1251, Cys-1253–Cys-1262, Cys-1269–Cys-1282, Cys-1274–Cys-1291, Cys-1293–Cys-1302, Cys-1309–Cys-1320, Cys-1314–Cys-1332, Cys-1334–Cys-1343, Cys-1350–Cys-1361, Cys-1355–Cys-1370, Cys-1372–Cys-1381, Cys-1389–Cys-1400, Cys-1394–Cys-1411, Cys-1413–Cys-1422, Cys-1447–Cys-1470, Cys-1452–Cys-1465, and Cys-1461–Cys-1477. Positions 177–215 (DVNECAVSPSPCRNGGTCINEVGSYLCRCPPEYTGPHCQ) constitute an EGF-like 5; calcium-binding domain. Positions 217 to 254 (LYQPCLPSPCRSGGTCVQTSDTTHTCSCLPGFTGQTCE) constitute an EGF-like 6 domain. Residue Thr-231 is glycosylated (O-linked (Fuc...) threonine; alternate). An O-linked (GalNAc...) threonine; alternate glycan is attached at Thr-231. Positions 256 to 292 (NVDDCTQHACENGGPCIDGINTYNCHCDKHWTGQYCT) constitute an EGF-like 7; calcium-binding domain. One can recognise an EGF-like 8; calcium-binding domain in the interval 294–332 (DVDECELSPNACQNGGTCHNTIGGFHCVCVNGWTGDDCS). An EGF-like 9; calcium-binding domain is found at 334-370 (NIDDCASAACSHGATCHDRVASFFCECPHGRTGLLCH). One can recognise an EGF-like 10 domain in the interval 371–409 (LDDACISNPCQKGSNCDTNPVSGKAICTCPPGYTGSACN). One can recognise an EGF-like 11; calcium-binding domain in the interval 411–449 (DIDECSLGANPCEHGGRCLNTKGSFQCKCLQGYEGPRCE). Residues 451 to 487 (DVNECKSNPCQNDATCLDQIGGFHCICMPGYEGVFCQ) enclose the EGF-like 12; calcium-binding domain. The EGF-like 13; calcium-binding domain maps to 489–524 (NSDDCASQPCLNGKCIDKINSFHCECPKGFSGSLCQ). The 37-residue stretch at 526–562 (DVDECASTPCKNGAKCTDGPNKYTCECTPGFSGIHCE) folds into the EGF-like 14; calcium-binding domain. Residues 564–599 (DINECASSPCHYGVCRDGVASFTCDCRPGYTGRLCE) enclose the EGF-like 15; calcium-binding domain. The EGF-like 16; calcium-binding domain occupies 601–637 (NINECLSQPCRNGGTCQDRENAYICTCPKGTTGVNCE). An EGF-like 17; calcium-binding domain is found at 639 to 674 (NIDDCKRKPCDYGKCIDKINGYECVCEPGYSGSMCN). The EGF-like 18; calcium-binding domain occupies 676-712 (NIDDCALNPCHNGGTCIDGVNSFTCLCPDGFRDATCL). Residues 714 to 749 (QHNECSSNPCIHGSCLDQINSYRCVCEAGWMGRNCD) form the EGF-like 19; calcium-binding domain. In terms of domain architecture, EGF-like 20; calcium-binding spans 751–787 (NINECLSNPCVNGGTCKDMTSGYLCTCRAGFSGPNCQ). The region spanning 789–825 (NINECASNPCLNQGSCIDDVAGFKCNCMLPYTGEVCE) is the EGF-like 21; calcium-binding domain. An EGF-like 22 domain is found at 827–865 (VLAPCSPRPCKNGGVCRESEDFQSFSCNCPAGWQGQTCE). The 37-residue stretch at 867–903 (DINECVRNPCTNGGVCENLRGGFQCRCNPGFTGALCE) folds into the EGF-like 23; calcium-binding domain. Residues 905–941 (DIDDCEPNPCSNGGVCQDRVNGFVCVCLAGFRGERCA) enclose the EGF-like 24; calcium-binding domain. The region spanning 943 to 979 (DIDECVSAPCRNGGNCTDCVNSYTCSCPAGFSGINCE) is the EGF-like 25; calcium-binding domain. Residue Asn-957 is glycosylated (N-linked (GlcNAc...) asparagine). Residues 981–1017 (NTPDCTESSCFNGGTCVDGISSFSCVCLPGFTGNYCQ) form the EGF-like 26 domain. An EGF-like 27; calcium-binding domain is found at 1019–1055 (DVNECDSRPCQNGGSCQDGYGTYKCTCPHGYTGLNCQ). 2 consecutive EGF-like domains span residues 1057 to 1093 (LVRW…IYCD) and 1095 to 1141 (PSVS…SYCQ). Positions 1143-1179 (QVDECQPNPCQNGATCTDYLGGYSCECVPGYHGMNCS) constitute an EGF-like 30; calcium-binding domain. Residue Asn-1177 is glycosylated (N-linked (GlcNAc...) asparagine). In terms of domain architecture, EGF-like 31; calcium-binding spans 1181-1217 (EINECLSQPCQNGGTCIDLVNTYKCSCPRGTQGVHCE). In terms of domain architecture, EGF-like 32; calcium-binding spans 1219 to 1263 (DIDDCSPSVDPLTGEPRCFNGGRCVDRVGGYGCVCPAGFVGERCE). 4 EGF-like domains span residues 1265–1303 (DVNE…KRCE), 1305–1344 (VFNG…SSCE), 1346–1382 (DSQS…HECQ), and 1385–1423 (MDSP…LLCH). The O-linked (Fuc...) threonine; alternate glycan is linked to Thr-1399. Thr-1399 is a glycosylation site (O-linked (GalNAc...) threonine; alternate). LNR repeat units follow at residues 1447–1487 (CEIA…PWQN), 1488–1525 (CSAA…LEGQ), and 1526–1566 (CNPL…VPQK). N-linked (GlcNAc...) asparagine glycosylation is present at Asn-1487. Cystine bridges form between Cys-1488–Cys-1512, Cys-1494–Cys-1507, Cys-1503–Cys-1519, Cys-1526–Cys-1552, Cys-1534–Cys-1547, and Cys-1543–Cys-1559. Asn-1585 carries an N-linked (GlcNAc...) asparagine glycan. The chain crosses the membrane as a helical span at residues 1727-1747 (PMFLVLLALAVLALAAVGVVV). At 1748 to 2437 (SRKRKREHGQ…QMNHIPEAFK (690 aa)) the chain is on the cytoplasmic side. Residues 1770–1790 (KKKRREPVGEDSVGLKPLKNS) are disordered. ANK repeat units follow at residues 1867-1910 (DGFT…NLHN), 1915-1944 (TGET…DANV), 1948-1978 (MGRT…DLDA), 1982-2011 (DGTT…DPNA), 2015-2044 (SGKS…NKDL), and 2048-2077 (KEET…NRDI). Disordered regions lie at residues 2127–2174 (IKPS…GGIM) and 2356–2437 (RMAP…EAFK). Residues 2356–2387 (RMAPPISSTQFLTPPSQHSYSNPMDNTPNHQQ) show a composition bias toward polar residues. The segment covering 2396–2411 (PSAGSPDQWSSSSPHS) has biased composition (low complexity). Polar residues predominate over residues 2412–2429 (NLSDWSEGISSPPTSMQM).

Belongs to the NOTCH family. In terms of processing, synthesized in the endoplasmic reticulum as an inactive form which is proteolytically cleaved by a furin-like convertase in the trans-Golgi network before it reaches the plasma membrane to yield an active, ligand-accessible form. Cleavage results in a C-terminal fragment N(TM) and a N-terminal fragment N(EC). Following ligand binding, it is cleaved by adam17 to yield a membrane-associated intermediate fragment called notch extracellular truncation (NEXT). Following endocytosis, this fragment is then cleaved by presenilin dependent gamma-secretase to release a Notch-derived peptide containing the intracellular domain (NICD) from the membrane. Post-translationally, O-glycosylated on the EGF-like domains. Contains both O-linked fucose and O-linked glucose. O-linked glycosylation by galnt11 is involved in determination of left/right symmetry: glycosylation promotes activation of notch1, possibly by promoting cleavage by adam17, modulating the balance between motile and immotile (sensory) cilia at the left-right organiser (LRO).

It is found in the cell membrane. Its subcellular location is the nucleus. Its function is as follows. Functions as a receptor for membrane-bound ligands Jagged-1 (JAG1), Jagged-2 (JAG2) and Delta-1 (DLL1) to regulate cell-fate determination. Upon ligand activation through the released notch intracellular domain (NICD) it forms a transcriptional activator complex with RBPJ/RBPSUH and activates genes of the enhancer of split locus. Affects the implementation of differentiation, proliferation and apoptotic programs. Involved in angiogenesis; negatively regulates endothelial cell proliferation and migration and angiogenic sprouting. Involved in the maturation of both CD4(+) and CD8(+) cells in the thymus. Important for follicular differentiation and possibly cell fate selection within the follicle. During cerebellar development, functions as a receptor for neuronal DNER and is involved in the differentiation of Bergmann glia. Represses neuronal and myogenic differentiation. May play an essential role in postimplantation development, probably in some aspect of cell specification and/or differentiation. May be involved in mesoderm development, somite formation and neurogenesis. Involved in determination of left/right symmetry by modulating the balance between motile and immotile (sensory) cilia at the left-right organiser (LRO). This chain is Neurogenic locus notch homolog protein 1 (notch1a), found in Danio rerio (Zebrafish).